The sequence spans 302 residues: Homoserine O-acetyltransferase (302 aa).

C142 functions as the Acyl-thioester intermediate in the catalytic mechanism. Residues K163 and S192 each coordinate substrate. H235 (proton acceptor) is an active-site residue. Residue E237 is part of the active site. R249 provides a ligand contact to substrate.

Belongs to the MetA family.

It is found in the cytoplasm. It catalyses the reaction L-homoserine + acetyl-CoA = O-acetyl-L-homoserine + CoA. Its pathway is amino-acid biosynthesis; L-methionine biosynthesis via de novo pathway; O-acetyl-L-homoserine from L-homoserine: step 1/1. In terms of biological role, transfers an acetyl group from acetyl-CoA to L-homoserine, forming acetyl-L-homoserine. This Geobacillus kaustophilus protein is Homoserine O-acetyltransferase.